We begin with the raw amino-acid sequence, 1034 residues long: Beta-galactosidase (1034 aa).

Glu481 (proton donor) is an active-site residue. Residue Glu547 is the Nucleophile of the active site.

Belongs to the glycosyl hydrolase 2 family.

The enzyme catalyses Hydrolysis of terminal non-reducing beta-D-galactose residues in beta-D-galactosides.. This is Beta-galactosidase (bgaM) from Priestia megaterium (strain DSM 319 / IMG 1521) (Bacillus megaterium).